The chain runs to 374 residues: Ribosomal RNA large subunit methyltransferase G (374 aa).

The protein belongs to the methyltransferase superfamily. RlmG family.

The protein localises to the cytoplasm. It catalyses the reaction guanosine(1835) in 23S rRNA + S-adenosyl-L-methionine = N(2)-methylguanosine(1835) in 23S rRNA + S-adenosyl-L-homocysteine + H(+). Functionally, specifically methylates the guanine in position 1835 (m2G1835) of 23S rRNA. The chain is Ribosomal RNA large subunit methyltransferase G from Pseudomonas savastanoi pv. phaseolicola (strain 1448A / Race 6) (Pseudomonas syringae pv. phaseolicola (strain 1448A / Race 6)).